A 215-amino-acid polypeptide reads, in one-letter code: Octanoyltransferase (215 aa).

The BPL/LPL catalytic domain occupies 31–206 (TDAPDEVWLV…QLVKHLDYAE (176 aa)). Residues 70–77 (RGGQVTYH), 137–139 (SLG), and 150–152 (GLA) each bind substrate. Catalysis depends on Cys168, which acts as the Acyl-thioester intermediate.

This sequence belongs to the LipB family.

The protein resides in the cytoplasm. The catalysed reaction is octanoyl-[ACP] + L-lysyl-[protein] = N(6)-octanoyl-L-lysyl-[protein] + holo-[ACP] + H(+). It participates in protein modification; protein lipoylation via endogenous pathway; protein N(6)-(lipoyl)lysine from octanoyl-[acyl-carrier-protein]: step 1/2. Functionally, catalyzes the transfer of endogenously produced octanoic acid from octanoyl-acyl-carrier-protein onto the lipoyl domains of lipoate-dependent enzymes. Lipoyl-ACP can also act as a substrate although octanoyl-ACP is likely to be the physiological substrate. The protein is Octanoyltransferase of Pseudomonas fluorescens (strain ATCC BAA-477 / NRRL B-23932 / Pf-5).